The following is a 302-amino-acid chain: Ribosomal RNA small subunit methyltransferase H (302 aa).

Residues 32–34 (GGH), aspartate 51, phenylalanine 78, aspartate 97, and glutamine 104 contribute to the S-adenosyl-L-methionine site.

The protein belongs to the methyltransferase superfamily. RsmH family.

The protein localises to the cytoplasm. The enzyme catalyses cytidine(1402) in 16S rRNA + S-adenosyl-L-methionine = N(4)-methylcytidine(1402) in 16S rRNA + S-adenosyl-L-homocysteine + H(+). In terms of biological role, specifically methylates the N4 position of cytidine in position 1402 (C1402) of 16S rRNA. The protein is Ribosomal RNA small subunit methyltransferase H of Nitratiruptor sp. (strain SB155-2).